The chain runs to 65 residues: Large ribosomal subunit protein bL28 (65 aa).

Belongs to the bacterial ribosomal protein bL28 family.

This chain is Large ribosomal subunit protein bL28, found in Pseudothermotoga lettingae (strain ATCC BAA-301 / DSM 14385 / NBRC 107922 / TMO) (Thermotoga lettingae).